We begin with the raw amino-acid sequence, 273 residues long: Alkaline ceramidase 1 (273 aa).

Over Met-1 to Glu-36 the chain is Lumenal. 5 residues coordinate Ca(2+): Asp-22, Trp-23, Glu-25, Asn-27, and Glu-36. The helical transmembrane segment at Phe-37–Met-57 threads the bilayer. Residues His-58 to Ser-72 lie on the Cytoplasmic side of the membrane. 2 consecutive transmembrane segments (helical) span residues Val-73–Gly-93 and Gln-94–Pro-114. Residue His-86 participates in Zn(2+) binding. Over Arg-115–Arg-126 the chain is Cytoplasmic. A helical transmembrane segment spans residues Phe-127 to Lys-147. The Lumenal portion of the chain corresponds to Pro-148 to Thr-149. The helical transmembrane segment at Val-150–Arg-167 threads the bilayer. Topologically, residues Thr-168 to Asp-177 are cytoplasmic. Residues Leu-178 to Ser-198 form a helical membrane-spanning segment. Residues Asp-199–His-215 are Lumenal-facing. Residues His-215 and His-219 each coordinate Zn(2+). The helical transmembrane segment at Ser-216–Val-236 threads the bilayer. Residues Asp-237–Cys-273 lie on the Cytoplasmic side of the membrane.

Belongs to the alkaline ceramidase family. The cofactor is Zn(2+). As to expression, highly expressed in skin. Weakly or not expressed in other tissues. Expressed by granular layer of interfollicular epidermis, sebaceous glands and infundibulum.

It localises to the endoplasmic reticulum membrane. It carries out the reaction an N-acylsphing-4-enine + H2O = sphing-4-enine + a fatty acid. The enzyme catalyses N-tetracosanoyl-sphing-4-enine + H2O = tetracosanoate + sphing-4-enine. It catalyses the reaction an N-acylsphinganine + H2O = sphinganine + a fatty acid. The catalysed reaction is N-(9Z-octadecenoyl)-sphing-4-enine + H2O = sphing-4-enine + (9Z)-octadecenoate. It carries out the reaction N-(15Z-tetracosenoyl)-sphing-4-enine + H2O = (15Z)-tetracosenoate + sphing-4-enine. Its pathway is lipid metabolism; sphingolipid metabolism. Inhibited by sphingosine. Inhibited by Mn(2+), Zn(2+), and Cu(2+) in a dose-dependent manner. Slightly activated by Ca(2+) in a dose-dependent manner. Its function is as follows. Endoplasmic reticulum ceramidase that catalyzes the hydrolysis of ceramides into sphingosine and free fatty acids at alkaline pH. Ceramides, sphingosine, and its phosphorylated form sphingosine-1-phosphate are bioactive lipids that mediate cellular signaling pathways regulating several biological processes including cell proliferation, apoptosis and differentiation. Exhibits a strong substrate specificity towards the natural stereoisomer of ceramides with D-erythro-sphingosine as a backbone and has a higher activity towards very long-chain unsaturated fatty acids like the C24:1-ceramide. May also hydrolyze dihydroceramides to produce dihydrosphingosine. ACER1 is a skin-specific ceramidase that regulates the levels of ceramides, sphingosine and sphingosine-1-phosphate in the epidermis, mediates the calcium-induced differentiation of epidermal keratinocytes and more generally plays an important role in skin homeostasis. This chain is Alkaline ceramidase 1, found in Mus musculus (Mouse).